The sequence spans 197 residues: Chitin synthase 3 (197 aa).

Belongs to the chitin synthase family. Class III subfamily.

It is found in the cell membrane. It carries out the reaction [(1-&gt;4)-N-acetyl-beta-D-glucosaminyl](n) + UDP-N-acetyl-alpha-D-glucosamine = [(1-&gt;4)-N-acetyl-beta-D-glucosaminyl](n+1) + UDP + H(+). Functionally, polymerizes chitin, a structural polymer of the cell wall and septum, by transferring the sugar moiety of UDP-GlcNAc to the non-reducing end of the growing chitin polymer. This Exophiala jeanselmei (Dematiaceous fungus) protein is Chitin synthase 3 (CHS3).